We begin with the raw amino-acid sequence, 95 residues long: Aspartyl/glutamyl-tRNA(Asn/Gln) amidotransferase subunit C (95 aa).

A compositionally biased stretch (basic and acidic residues) spans alanine 55–valine 67. The segment at alanine 55 to threonine 83 is disordered.

The protein belongs to the GatC family. Heterotrimer of A, B and C subunits.

It carries out the reaction L-glutamyl-tRNA(Gln) + L-glutamine + ATP + H2O = L-glutaminyl-tRNA(Gln) + L-glutamate + ADP + phosphate + H(+). The enzyme catalyses L-aspartyl-tRNA(Asn) + L-glutamine + ATP + H2O = L-asparaginyl-tRNA(Asn) + L-glutamate + ADP + phosphate + 2 H(+). Allows the formation of correctly charged Asn-tRNA(Asn) or Gln-tRNA(Gln) through the transamidation of misacylated Asp-tRNA(Asn) or Glu-tRNA(Gln) in organisms which lack either or both of asparaginyl-tRNA or glutaminyl-tRNA synthetases. The reaction takes place in the presence of glutamine and ATP through an activated phospho-Asp-tRNA(Asn) or phospho-Glu-tRNA(Gln). The protein is Aspartyl/glutamyl-tRNA(Asn/Gln) amidotransferase subunit C of Natranaerobius thermophilus (strain ATCC BAA-1301 / DSM 18059 / JW/NM-WN-LF).